A 551-amino-acid chain; its full sequence is Glucans biosynthesis protein D (551 aa).

Residues 1 to 32 (MDRRRFIKGSMAMAAVCGTSGIASLFSQAAFA) constitute a signal peptide (tat-type signal).

This sequence belongs to the OpgD/OpgG family. Post-translationally, predicted to be exported by the Tat system. The position of the signal peptide cleavage has not been experimentally proven.

The protein localises to the periplasm. It functions in the pathway glycan metabolism; osmoregulated periplasmic glucan (OPG) biosynthesis. Its function is as follows. Probably involved in the control of the structural glucose backbone of osmoregulated periplasmic glucans (OPGs). In Escherichia coli O127:H6 (strain E2348/69 / EPEC), this protein is Glucans biosynthesis protein D.